The primary structure comprises 470 residues: 3-isopropylmalate dehydratase large subunit (470 aa).

[4Fe-4S] cluster is bound by residues cysteine 351, cysteine 411, and cysteine 414.

This sequence belongs to the aconitase/IPM isomerase family. LeuC type 1 subfamily. Heterodimer of LeuC and LeuD. [4Fe-4S] cluster serves as cofactor.

The enzyme catalyses (2R,3S)-3-isopropylmalate = (2S)-2-isopropylmalate. It functions in the pathway amino-acid biosynthesis; L-leucine biosynthesis; L-leucine from 3-methyl-2-oxobutanoate: step 2/4. Catalyzes the isomerization between 2-isopropylmalate and 3-isopropylmalate, via the formation of 2-isopropylmaleate. The protein is 3-isopropylmalate dehydratase large subunit of Rhodopseudomonas palustris (strain BisA53).